The primary structure comprises 188 residues: Elongation factor P (188 aa).

Residue K34 is modified to N6-(3,6-diaminohexanoyl)-5-hydroxylysine.

This sequence belongs to the elongation factor P family. Post-translationally, may be beta-lysylated on the epsilon-amino group of Lys-34 by the combined action of EpmA and EpmB, and then hydroxylated on the C5 position of the same residue by EpmC (if this protein is present). Lysylation is critical for the stimulatory effect of EF-P on peptide-bond formation. The lysylation moiety may extend toward the peptidyltransferase center and stabilize the terminal 3-CCA end of the tRNA. Hydroxylation of the C5 position on Lys-34 may allow additional potential stabilizing hydrogen-bond interactions with the P-tRNA.

The protein localises to the cytoplasm. It participates in protein biosynthesis; polypeptide chain elongation. Its function is as follows. Involved in peptide bond synthesis. Alleviates ribosome stalling that occurs when 3 or more consecutive Pro residues or the sequence PPG is present in a protein, possibly by augmenting the peptidyl transferase activity of the ribosome. Modification of Lys-34 is required for alleviation. This is Elongation factor P from Yersinia pseudotuberculosis serotype O:1b (strain IP 31758).